A 75-amino-acid chain; its full sequence is 8.9 kDa basic protein (75 aa).

The sequence is that of 8.9 kDa basic protein (P8.9) from Orgyia pseudotsugata (Douglas-fir tussock moth).